Consider the following 607-residue polypeptide: Protein NRT1/ PTR FAMILY 1.2 (607 aa).

Helical transmembrane passes span 65–85 (TNVL…GAFL), 96–116 (ISIA…TAML), 138–158 (ASQL…SGGI), 185–205 (FFGW…TGIV), 215–235 (IGFG…ILAS), 374–394 (VPAG…VILY), 418–438 (MGLG…VESF), 460–480 (AMWL…TAIG), 496–516 (IAAS…SVVL), and 544–564 (YYWV…ICSW). Serine 601 is subject to Phosphoserine.

This sequence belongs to the major facilitator superfamily. Proton-dependent oligopeptide transporter (POT/PTR) (TC 2.A.17) family. Expressed in shoots, stems, leaves, flowers and siliques. Mainly detected in larger expanded leaves, in the companion cells of major veins.

The protein resides in the cell membrane. Its function is as follows. Low-affinity nitrate transporter involved in xylem-to-phloem transfer for redistributing nitrate into developing leaves. Not involved in dipeptides transport. In Arabidopsis thaliana (Mouse-ear cress), this protein is Protein NRT1/ PTR FAMILY 1.2 (NPF1.2).